A 571-amino-acid chain; its full sequence is Potassium-transporting ATPase potassium-binding subunit (571 aa).

11 helical membrane-spanning segments follow: residues 3–23, 64–84, 135–155, 179–199, 254–274, 284–304, 330–350, 357–376, 421–441, 488–508, and 527–547; these read LIGW…VKPL, LGYG…LYAI, LGLT…AVAL, LYVL…QGMP, LANL…TNVF, GWAI…VTYA, FGIV…CGAV, FTAL…EIIV, MLAI…ATVL, LALG…AIAG, and GGLF…LTFF.

Belongs to the KdpA family. In terms of assembly, the system is composed of three essential subunits: KdpA, KdpB and KdpC.

Its subcellular location is the cell inner membrane. Part of the high-affinity ATP-driven potassium transport (or Kdp) system, which catalyzes the hydrolysis of ATP coupled with the electrogenic transport of potassium into the cytoplasm. This subunit binds the periplasmic potassium ions and delivers the ions to the membrane domain of KdpB through an intramembrane tunnel. In Methylorubrum populi (strain ATCC BAA-705 / NCIMB 13946 / BJ001) (Methylobacterium populi), this protein is Potassium-transporting ATPase potassium-binding subunit.